Here is a 181-residue protein sequence, read N- to C-terminus: Nedd8-conjugating enzyme UbcE2M (181 aa).

Interaction with Uba3 stretches follow at residues L4 to L7 and A24 to L54. The 145-residue stretch at A26–V170 folds into the UBC core domain. C108 functions as the Glycyl thioester intermediate in the catalytic mechanism.

It belongs to the ubiquitin-conjugating enzyme family. UBC12 subfamily. Interacts with Uba3. Expressed in the wing disk.

It carries out the reaction [E1 NEDD8-activating enzyme]-S-[NEDD8 protein]-yl-L-cysteine + [E2 NEDD8-conjugating enzyme]-L-cysteine = [E1 NEDD8-activating enzyme]-L-cysteine + [E2 NEDD8-conjugating enzyme]-S-[NEDD8-protein]-yl-L-cysteine.. The protein operates within protein modification; protein neddylation. Accepts the ubiquitin-like protein Nedd8 from the Uba3-APP-BP1 E1 complex and catalyzes its covalent attachment to other proteins. Required for Cul1 and Cul3 neddylation. Negatively regulates full-length ci stability and hedgehog signaling. The sequence is that of Nedd8-conjugating enzyme UbcE2M from Drosophila melanogaster (Fruit fly).